Consider the following 904-residue polypeptide: UPF0182 protein CKL_0015 (904 aa).

Helical transmembrane passes span 9–29, 47–67, 96–116, 157–177, 208–228, 253–273, and 279–299; these read SLIV…DFII, LIAI…SIVL, IFII…AATY, ILSL…TLSV, LAVL…LKCI, YKII…SILV, and IIVS…SYTV.

The protein belongs to the UPF0182 family.

Its subcellular location is the cell membrane. The protein is UPF0182 protein CKL_0015 of Clostridium kluyveri (strain ATCC 8527 / DSM 555 / NBRC 12016 / NCIMB 10680 / K1).